We begin with the raw amino-acid sequence, 118 residues long: Large ribosomal subunit protein bL20 (118 aa).

The protein belongs to the bacterial ribosomal protein bL20 family.

Its function is as follows. Binds directly to 23S ribosomal RNA and is necessary for the in vitro assembly process of the 50S ribosomal subunit. It is not involved in the protein synthesizing functions of that subunit. The sequence is that of Large ribosomal subunit protein bL20 from Staphylococcus saprophyticus subsp. saprophyticus (strain ATCC 15305 / DSM 20229 / NCIMB 8711 / NCTC 7292 / S-41).